We begin with the raw amino-acid sequence, 267 residues long: Very long chain fatty acid elongase 6 (267 aa).

Asn-2 is a glycosylation site (N-linked (GlcNAc...) asparagine). Helical transmembrane passes span 34-51 (FLFS…RHLM), 70-90 (LAVF…YILM), 111-131 (FWAY…IFII), 136-156 (KLIF…WYSY), 159-179 (MVAG…VMYS), 197-217 (FITL…YLVF), and 234-254 (IFWS…FFFE).

The protein belongs to the ELO family. ELOVL6 subfamily. In terms of processing, N-Glycosylated. As to expression, expressed in liver and barely in brain.

The protein resides in the endoplasmic reticulum membrane. It carries out the reaction a very-long-chain acyl-CoA + malonyl-CoA + H(+) = a very-long-chain 3-oxoacyl-CoA + CO2 + CoA. The catalysed reaction is hexadecanoyl-CoA + malonyl-CoA + H(+) = 3-oxooctadecanoyl-CoA + CO2 + CoA. The enzyme catalyses (9Z)-hexadecenoyl-CoA + malonyl-CoA + H(+) = 3-oxo-(11Z)-octadecenoyl-CoA + CO2 + CoA. It catalyses the reaction dodecanoyl-CoA + malonyl-CoA + H(+) = 3-oxotetradecanoyl-CoA + CO2 + CoA. It carries out the reaction tetradecanoyl-CoA + malonyl-CoA + H(+) = 3-oxohexadecanoyl-CoA + CO2 + CoA. The catalysed reaction is (9Z)-octadecenoyl-CoA + malonyl-CoA + H(+) = 3-oxo-(11Z)-eicosenoyl-CoA + CO2 + CoA. The enzyme catalyses (9Z,12Z)-octadecadienoyl-CoA + malonyl-CoA + H(+) = (11Z,14Z)-3-oxoicosa-11,14-dienoyl-CoA + CO2 + CoA. It catalyses the reaction (9Z,12Z,15Z)-octadecatrienoyl-CoA + malonyl-CoA + H(+) = (11Z,14Z,17Z)-3-oxoeicosatrienoyl-CoA + CO2 + CoA. The protein operates within lipid metabolism; fatty acid biosynthesis. With respect to regulation, the reaction is stimulated by the presence of HSD17B12, the enzyme catalyzing the second step of the elongation cycle. Catalyzes the first and rate-limiting reaction of the four reactions that constitute the long-chain fatty acids elongation cycle. This endoplasmic reticulum-bound enzymatic process allows the addition of 2 carbons to the chain of long- and very long-chain fatty acids (VLCFAs) per cycle. Condensing enzyme that elongates fatty acids with 12, 14 and 16 carbons with higher activity toward C16:0 acyl-CoAs. Catalyzes the synthesis of unsaturated C16 long chain fatty acids and, to a lesser extent, C18:0 and those with low desaturation degree. May participate in the production of saturated and monounsaturated VLCFAs of different chain lengths that are involved in multiple biological processes as precursors of membrane lipids and lipid mediators. The protein is Very long chain fatty acid elongase 6 of Rattus norvegicus (Rat).